The sequence spans 191 residues: Cytochrome c biogenesis ATP-binding export protein CcmA (191 aa).

Residues 2–190 enclose the ABC transporter domain; sequence LSLHQLQFKN…SIKSAQILRI (189 aa). Residue 29 to 36 coordinates ATP; that stretch reads GANGCGKS.

It belongs to the ABC transporter superfamily. CcmA exporter (TC 3.A.1.107) family. The complex is composed of two ATP-binding proteins (CcmA) and two transmembrane proteins (CcmB).

The protein resides in the cell inner membrane. It carries out the reaction heme b(in) + ATP + H2O = heme b(out) + ADP + phosphate + H(+). In terms of biological role, part of the ABC transporter complex CcmAB involved in the biogenesis of c-type cytochromes; once thought to export heme, this seems not to be the case, but its exact role is uncertain. Responsible for energy coupling to the transport system. In Rickettsia conorii (strain ATCC VR-613 / Malish 7), this protein is Cytochrome c biogenesis ATP-binding export protein CcmA.